Reading from the N-terminus, the 872-residue chain is Alanine--tRNA ligase (872 aa).

Positions 567, 571, 669, and 673 each coordinate Zn(2+).

It belongs to the class-II aminoacyl-tRNA synthetase family. It depends on Zn(2+) as a cofactor.

It is found in the cytoplasm. It carries out the reaction tRNA(Ala) + L-alanine + ATP = L-alanyl-tRNA(Ala) + AMP + diphosphate. Its function is as follows. Catalyzes the attachment of alanine to tRNA(Ala) in a two-step reaction: alanine is first activated by ATP to form Ala-AMP and then transferred to the acceptor end of tRNA(Ala). Also edits incorrectly charged Ser-tRNA(Ala) and Gly-tRNA(Ala) via its editing domain. The sequence is that of Alanine--tRNA ligase from Streptococcus gordonii (strain Challis / ATCC 35105 / BCRC 15272 / CH1 / DL1 / V288).